Here is a 429-residue protein sequence, read N- to C-terminus: CinA-like protein (429 aa).

It belongs to the CinA family.

In Chlorobium limicola (strain DSM 245 / NBRC 103803 / 6330), this protein is CinA-like protein.